A 287-amino-acid polypeptide reads, in one-letter code: S-methyl-5'-thioadenosine phosphorylase (287 aa).

Residues Thr-13 and 55-56 (RH) each bind phosphate. Met-186 lines the substrate pocket. Thr-187 is a binding site for phosphate. Position 210 to 212 (210 to 212 (DYD)) interacts with substrate.

This sequence belongs to the PNP/MTAP phosphorylase family. MTAP subfamily. As to quaternary structure, homohexamer. Dimer of a homotrimer.

The enzyme catalyses S-methyl-5'-thioadenosine + phosphate = 5-(methylsulfanyl)-alpha-D-ribose 1-phosphate + adenine. The protein operates within amino-acid biosynthesis; L-methionine biosynthesis via salvage pathway; S-methyl-5-thio-alpha-D-ribose 1-phosphate from S-methyl-5'-thioadenosine (phosphorylase route): step 1/1. Functionally, catalyzes the reversible phosphorylation of S-methyl-5'-thioadenosine (MTA) to adenine and 5-methylthioribose-1-phosphate. Involved in the breakdown of MTA, a major by-product of polyamine biosynthesis. Responsible for the first step in the methionine salvage pathway after MTA has been generated from S-adenosylmethionine. Has broad substrate specificity with 6-aminopurine nucleosides as preferred substrates. This chain is S-methyl-5'-thioadenosine phosphorylase, found in Leptospira interrogans serogroup Icterohaemorrhagiae serovar Lai (strain 56601).